A 132-amino-acid chain; its full sequence is Transcription antitermination protein NusB (132 aa).

This sequence belongs to the NusB family.

Involved in transcription antitermination. Required for transcription of ribosomal RNA (rRNA) genes. Binds specifically to the boxA antiterminator sequence of the ribosomal RNA (rrn) operons. In Sulfurimonas denitrificans (strain ATCC 33889 / DSM 1251) (Thiomicrospira denitrificans (strain ATCC 33889 / DSM 1251)), this protein is Transcription antitermination protein NusB.